A 169-amino-acid chain; its full sequence is Peptide deformylase 1 (169 aa).

2 residues coordinate Fe cation: cysteine 92 and histidine 134. Glutamate 135 is a catalytic residue. Histidine 138 is a Fe cation binding site.

The protein belongs to the polypeptide deformylase family. It depends on Fe(2+) as a cofactor.

The enzyme catalyses N-terminal N-formyl-L-methionyl-[peptide] + H2O = N-terminal L-methionyl-[peptide] + formate. In terms of biological role, removes the formyl group from the N-terminal Met of newly synthesized proteins. Requires at least a dipeptide for an efficient rate of reaction. N-terminal L-methionine is a prerequisite for activity but the enzyme has broad specificity at other positions. This chain is Peptide deformylase 1, found in Ralstonia nicotianae (strain ATCC BAA-1114 / GMI1000) (Ralstonia solanacearum).